The sequence spans 293 residues: Elongation factor Ts (293 aa).

Residues 80–83 (TDFV) form an involved in Mg(2+) ion dislocation from EF-Tu region.

This sequence belongs to the EF-Ts family.

It localises to the cytoplasm. Functionally, associates with the EF-Tu.GDP complex and induces the exchange of GDP to GTP. It remains bound to the aminoacyl-tRNA.EF-Tu.GTP complex up to the GTP hydrolysis stage on the ribosome. This chain is Elongation factor Ts, found in Staphylococcus aureus (strain USA300).